The following is a 337-amino-acid chain: Phosphoenolpyruvate transferase (337 aa).

Asp69 is a binding site for 7,8-didemethyl-8-hydroxy-5-deazariboflavin.

This sequence belongs to the CofD family. In terms of assembly, homodimer. Mg(2+) is required as a cofactor.

The enzyme catalyses enolpyruvoyl-2-diphospho-5'-guanosine + 7,8-didemethyl-8-hydroxy-5-deazariboflavin = dehydro coenzyme F420-0 + GMP + H(+). Its pathway is cofactor biosynthesis; coenzyme F420 biosynthesis. Its function is as follows. Catalyzes the transfer of the phosphoenolpyruvate moiety from enoylpyruvoyl-2-diphospho-5'-guanosine (EPPG) to 7,8-didemethyl-8-hydroxy-5-deazariboflavin (FO) with the formation of dehydro coenzyme F420-0 and GMP. This Mycobacterium avium (strain 104) protein is Phosphoenolpyruvate transferase.